We begin with the raw amino-acid sequence, 69 residues long: Beta-defensin 1 (69 aa).

Residues 1-21 (MKTHYFLLVMLFFLFSQMELG) form the signal peptide. Residues 22–32 (AGILTSLGRRT) constitute a propeptide that is removed on maturation. Disulfide bonds link C37/C66, C44/C59, and C49/C67.

The protein belongs to the beta-defensin family. In terms of assembly, monomer. Homodimer. As to expression, highly expressed in kidney.

It is found in the secreted. The protein localises to the membrane. Its function is as follows. Has bactericidal activity. May act as a ligand for C-C chemokine receptor CCR6. Positively regulates the sperm motility and bactericidal activity in a CCR6-dependent manner. Binds to CCR6 and triggers Ca2+ mobilization in the sperm which is important for its motility. The protein is Beta-defensin 1 (Defb1) of Rattus norvegicus (Rat).